The following is a 70-amino-acid chain: Aurein-3.1 (70 aa).

The first 22 residues, 1 to 22, serve as a signal peptide directing secretion; sequence MAFLKKSLFLVLFLGLVSLSIC. A propeptide spanning residues 23–49 is cleaved from the precursor; the sequence is EKEKRQNEEDEDENEAANHEEGSEEKR. The interval 27 to 48 is disordered; that stretch reads RQNEEDEDENEAANHEEGSEEK. A compositionally biased stretch (basic and acidic residues) spans 38-48; sequence AANHEEGSEEK. Isoleucine 66 carries the isoleucine amide modification.

In terms of tissue distribution, expressed by the skin dorsal glands.

The protein resides in the secreted. The protein localises to the target cell membrane. In terms of biological role, amphipathic alpha-helical antimicrobial peptide with weak to potent activity against Gram-positive bacteria, and no activity against Gram-negative bacteria. Probably acts by disturbing membrane functions with its amphipathic structure. Shows anticancer activity. This is Aurein-3.1 from Ranoidea aurea (Green and golden bell frog).